Consider the following 318-residue polypeptide: Large ribosomal subunit protein uL10 (318 aa).

Position 24 is a phosphotyrosine (tyrosine 24). At threonine 59 the chain carries Phosphothreonine. Lysine 264 is covalently cross-linked (Glycyl lysine isopeptide (Lys-Gly) (interchain with G-Cter in ubiquitin)). Lysine 298 is covalently cross-linked (Glycyl lysine isopeptide (Lys-Gly) (interchain with G-Cter in SUMO1); alternate). Lysine 298 is covalently cross-linked (Glycyl lysine isopeptide (Lys-Gly) (interchain with G-Cter in SUMO2); alternate). The segment at 298–318 (KVEAKEESEESDEDMGFGLFD) is disordered. Positions 303-312 (EESEESDEDM) are enriched in acidic residues. Residues serine 305 and serine 308 each carry the phosphoserine modification.

This sequence belongs to the universal ribosomal protein uL10 family. P0 forms a pentameric complex by interaction with dimers of P1 and P2. Identified in a IGF2BP1-dependent mRNP granule complex containing untranslated mRNAs. Interacts with APEX1. Interacts with FMR1. Post-translationally, ubiquitinated at Lys-264 by RNF14 and RNF25 in response to ribosome collisions (ribosome stalling).

It is found in the nucleus. The protein localises to the cytoplasm. Functionally, ribosomal protein P0 is the functional equivalent of E.coli protein L10. The sequence is that of Large ribosomal subunit protein uL10 (RPLP0) from Sus scrofa (Pig).